Reading from the N-terminus, the 1341-residue chain is Aldehyde oxidase 4 (1341 aa).

A 2Fe-2S ferredoxin-type domain is found at 8–95; the sequence is DELIFFVNGK…GAAVTTVEGV (88 aa). [2Fe-2S] cluster-binding residues include Cys47, Cys52, Cys55, and Cys77. Mo-molybdopterin is bound at residue Gln116. Residues Cys117, Cys120, Cys152, and Cys154 each coordinate [2Fe-2S] cluster. Cys154 lines the Mo-molybdopterin pocket. Residues 239 to 424 form the FAD-binding PCMH-type domain; the sequence is FQGERTTWLA…LSVFIPYSSQ (186 aa). Residues 267–274, Ala348, Thr357, His361, Asp370, and Val414 each bind FAD; that span reads LIMGNTTV. Residues Ala805, 805 to 806, Leu1046, 1087 to 1090, Gln1202, and Leu1266 each bind Mo-molybdopterin; these read AF and GSMG. The active-site Proton acceptor; for azaheterocycle hydroxylase activity is the Glu1268.

Belongs to the xanthine dehydrogenase family. In terms of assembly, homodimer. [2Fe-2S] cluster is required as a cofactor. It depends on FAD as a cofactor. Mo-molybdopterin serves as cofactor. Detected in liver, testis, kidney, brain, Harderian gland and olfactory mucosa.

It is found in the cytoplasm. It catalyses the reaction an aldehyde + O2 + H2O = a carboxylate + H2O2 + H(+). The catalysed reaction is retinal + O2 + H2O = retinoate + H2O2 + H(+). Functionally, aldehyde oxidase able to catalyze the oxidation of retinaldehyde into retinoate. Acts as a negative modulator of the epidermal trophism. May be able to oxidize a wide variety of aldehydes into their corresponding carboxylates and to hydroxylate azaheterocycles. The protein is Aldehyde oxidase 4 (AOX4) of Cavia porcellus (Guinea pig).